Reading from the N-terminus, the 557-residue chain is Carbamoyl phosphate synthase large chain, N-terminal section (557 aa).

The tract at residues 1 to 402 (MPKRTDIKKI…ALLKAVRSLE (402 aa)) is carboxyphosphate synthetic domain. 12 residues coordinate ATP: Arg129, Arg169, Gly175, Gly176, Lys208, Leu210, Glu215, Gly241, Val242, His243, Gln285, and Glu299. Positions 133–328 (KETMESIGLK…IAKVAAKLAV (196 aa)) constitute an ATP-grasp domain. The Mg(2+) site is built by Gln285, Glu299, and Asn301. Gln285, Glu299, and Asn301 together coordinate Mn(2+). Residues 403-553 (LDRYGLAFPK…PYYTVDGQEI (151 aa)) are oligomerization domain.

This sequence belongs to the CarB family. In terms of assembly, composed of two chains; the small (or glutamine) chain promotes the hydrolysis of glutamine to ammonia, which is used by the large (or ammonia) chain to synthesize carbamoyl phosphate. Tetramer of heterodimers (alpha,beta)4. The cofactor is Mg(2+). It depends on Mn(2+) as a cofactor.

The enzyme catalyses hydrogencarbonate + L-glutamine + 2 ATP + H2O = carbamoyl phosphate + L-glutamate + 2 ADP + phosphate + 2 H(+). The catalysed reaction is hydrogencarbonate + NH4(+) + 2 ATP = carbamoyl phosphate + 2 ADP + phosphate + 2 H(+). It participates in amino-acid biosynthesis; L-arginine biosynthesis; carbamoyl phosphate from bicarbonate: step 1/1. The protein operates within pyrimidine metabolism; UMP biosynthesis via de novo pathway; (S)-dihydroorotate from bicarbonate: step 1/3. Its function is as follows. Large subunit of the glutamine-dependent carbamoyl phosphate synthetase (CPSase). CPSase catalyzes the formation of carbamoyl phosphate from the ammonia moiety of glutamine, carbonate, and phosphate donated by ATP, constituting the first step of 2 biosynthetic pathways, one leading to arginine and/or urea and the other to pyrimidine nucleotides. The large subunit (synthetase) binds the substrates ammonia (free or transferred from glutamine from the small subunit), hydrogencarbonate and ATP and carries out an ATP-coupled ligase reaction, activating hydrogencarbonate by forming carboxy phosphate which reacts with ammonia to form carbamoyl phosphate. The polypeptide is Carbamoyl phosphate synthase large chain, N-terminal section (carB1) (Aquifex aeolicus (strain VF5)).